The sequence spans 196 residues: Ribonuclease HII (196 aa).

Residues 9 to 196 (NLIAGVDEVG…APVKRALNLV (188 aa)) form the RNase H type-2 domain. Residues Asp15, Glu16, and Asp107 each contribute to the a divalent metal cation site.

It belongs to the RNase HII family. The cofactor is Mn(2+). It depends on Mg(2+) as a cofactor.

It is found in the cytoplasm. It catalyses the reaction Endonucleolytic cleavage to 5'-phosphomonoester.. In terms of biological role, endonuclease that specifically degrades the RNA of RNA-DNA hybrids. The protein is Ribonuclease HII of Proteus mirabilis (strain HI4320).